We begin with the raw amino-acid sequence, 244 residues long: tRNA (guanine-N(7)-)-methyltransferase (244 aa).

S-adenosyl-L-methionine contacts are provided by Glu74, Glu99, Asp126, and Asp149. Residue Asp149 is part of the active site. Substrate contacts are provided by residues Lys153, Asp185, and 222–225 (TKFE).

Belongs to the class I-like SAM-binding methyltransferase superfamily. TrmB family.

It carries out the reaction guanosine(46) in tRNA + S-adenosyl-L-methionine = N(7)-methylguanosine(46) in tRNA + S-adenosyl-L-homocysteine. It functions in the pathway tRNA modification; N(7)-methylguanine-tRNA biosynthesis. Its function is as follows. Catalyzes the formation of N(7)-methylguanine at position 46 (m7G46) in tRNA. The sequence is that of tRNA (guanine-N(7)-)-methyltransferase from Colwellia psychrerythraea (strain 34H / ATCC BAA-681) (Vibrio psychroerythus).